We begin with the raw amino-acid sequence, 443 residues long: Methionine aminopeptidase 2-1 (443 aa).

Residues 1 to 90 form a disordered region; that stretch reads MAAQADDELN…RVPVSELFPN (90 aa). A compositionally biased stretch (acidic residues) spans 33-48; sequence ADNDDSEDDEKEEEGG. The segment covering 58–73 has biased composition (basic residues); it reads KKKKKRKPKKKKKGGA. Residue histidine 196 coordinates substrate. Residues aspartate 216, aspartate 227, and histidine 296 each contribute to the a divalent metal cation site. Histidine 304 contacts substrate. Residues glutamate 329 and glutamate 424 each contribute to the a divalent metal cation site.

This sequence belongs to the peptidase M24A family. Methionine aminopeptidase eukaryotic type 2 subfamily. The cofactor is Co(2+). Zn(2+) is required as a cofactor. Mn(2+) serves as cofactor. It depends on Fe(2+) as a cofactor.

It localises to the cytoplasm. The enzyme catalyses Release of N-terminal amino acids, preferentially methionine, from peptides and arylamides.. Cotranslationally removes the N-terminal methionine from nascent proteins. The N-terminal methionine is often cleaved when the second residue in the primary sequence is small and uncharged (Met-Ala-, Cys, Gly, Pro, Ser, Thr, or Val). In Talaromyces stipitatus (strain ATCC 10500 / CBS 375.48 / QM 6759 / NRRL 1006) (Penicillium stipitatum), this protein is Methionine aminopeptidase 2-1.